Consider the following 318-residue polypeptide: MVFFPHRHLIGIKGLTETDITYLLDKADEAVKISRQREKKTSTLRGLTQINLFFEASTRTQSSFELAGKRLGADVMNMSVGNSSVKKGETLIDTAMTLNAMHPDVLVVRHASAGAAALLSQKVACAVINAGDGQHEHPTQALLDALTIRRAKGKLSRIIVAICGDVLHSRVARSNILLLNAMGARVRVVAPATLLPSGIADMSVEVFHDMKEGLKDADVVMMLRLQRERMAGSFVPSIREYFHFYGLDAEKLKAAKEDALVMHPGPMNRGVEIASDVADGPQSVIESQVEMGVAVRMAVMESLLISDNNGPRSEGVGA.

Residues Arg-59 and Thr-60 each coordinate carbamoyl phosphate. L-aspartate is bound at residue Lys-87. Carbamoyl phosphate contacts are provided by Arg-109, His-137, and Gln-140. L-aspartate is bound by residues Arg-170 and Arg-224. The carbamoyl phosphate site is built by Gly-265 and Pro-266.

This sequence belongs to the aspartate/ornithine carbamoyltransferase superfamily. ATCase family. As to quaternary structure, heterododecamer (2C3:3R2) of six catalytic PyrB chains organized as two trimers (C3), and six regulatory PyrI chains organized as three dimers (R2).

It catalyses the reaction carbamoyl phosphate + L-aspartate = N-carbamoyl-L-aspartate + phosphate + H(+). It functions in the pathway pyrimidine metabolism; UMP biosynthesis via de novo pathway; (S)-dihydroorotate from bicarbonate: step 2/3. In terms of biological role, catalyzes the condensation of carbamoyl phosphate and aspartate to form carbamoyl aspartate and inorganic phosphate, the committed step in the de novo pyrimidine nucleotide biosynthesis pathway. In Allorhizobium ampelinum (strain ATCC BAA-846 / DSM 112012 / S4) (Agrobacterium vitis (strain S4)), this protein is Aspartate carbamoyltransferase catalytic subunit.